A 103-amino-acid chain; its full sequence is Acylphosphatase-2 (103 aa).

The region spanning serine 13–tyrosine 103 is the Acylphosphatase-like domain. Residues arginine 28 and asparagine 46 contribute to the active site.

This sequence belongs to the acylphosphatase family.

It catalyses the reaction an acyl phosphate + H2O = a carboxylate + phosphate + H(+). The chain is Acylphosphatase-2 (acyp2) from Xenopus tropicalis (Western clawed frog).